The sequence spans 101 residues: Gamma-secretase subunit PEN-2 (101 aa).

Residues 1–17 lie on the Cytoplasmic side of the membrane; the sequence is MNLERVSNEEKLNLCRK. The segment at residues 18–36 is an intramembrane region (helical); that stretch reads YYLGGFAFLPFLWLVNIFW. The Cytoplasmic segment spans residues 37–57; the sequence is FFREAFLAPAYTEQSQIKGYV. Residues 58–78 traverse the membrane as a helical segment; sequence WRSAVGFLFWVIILATWITIF. At 79–101 the chain is on the lumenal side; that stretch reads QIYRPRWGALGDYLSFTIPLGTP.

The protein belongs to the PEN-2 family. The functional gamma-secretase complex is composed of at least four polypeptides: a presenilin homodimer (PSEN1 or PSEN2), nicastrin (NCSTN), APH1 (APH1A or APH1B) and PSENEN.

The protein localises to the endoplasmic reticulum membrane. Its subcellular location is the golgi apparatus. It is found in the golgi stack membrane. The protein resides in the cell membrane. It localises to the membrane. Essential subunit of the gamma-secretase complex, an endoprotease complex that catalyzes the intramembrane cleavage of integral membrane proteins such as Notch receptors and APP (amyloid-beta precursor protein). The gamma-secretase complex plays a role in Notch and Wnt signaling cascades and regulation of downstream processes via its role in processing key regulatory proteins, and by regulating cytosolic CTNNB1 levels. PSENEN modulates both endoproteolysis of presenilin and gamma-secretase activity. This is Gamma-secretase subunit PEN-2 (Psenen) from Mus musculus (Mouse).